The chain runs to 298 residues: GTP cyclohydrolase FolE2 (298 aa).

This sequence belongs to the GTP cyclohydrolase IV family.

The enzyme catalyses GTP + H2O = 7,8-dihydroneopterin 3'-triphosphate + formate + H(+). The protein operates within cofactor biosynthesis; 7,8-dihydroneopterin triphosphate biosynthesis; 7,8-dihydroneopterin triphosphate from GTP: step 1/1. Converts GTP to 7,8-dihydroneopterin triphosphate. The polypeptide is GTP cyclohydrolase FolE2 (Pseudomonas fluorescens (strain Pf0-1)).